A 242-amino-acid chain; its full sequence is uncharacterized protein (242 aa).

The next 3 helical transmembrane spans lie at 75–95 (YAIF…HNFY), 116–136 (IVLI…FSLI), and 176–196 (IQGL…LEVI). The interval 204–242 (DVEMSSMRGQAITTEPASDNTMAEGTDCNTSKDVESGSS) is disordered. A compositionally biased stretch (polar residues) spans 210–232 (MRGQAITTEPASDNTMAEGTDCN). The span at 233-242 (TSKDVESGSS) shows a compositional bias: basic and acidic residues.

Its subcellular location is the cytoplasm. The protein resides in the membrane. This is an uncharacterized protein from Schizosaccharomyces pombe (strain 972 / ATCC 24843) (Fission yeast).